We begin with the raw amino-acid sequence, 732 residues long: Subtilisin-like protease SBT4.13 (732 aa).

The signal sequence occupies residues 1 to 24 (MATLAASSSLLSCLLVLFLSSVSA). Positions 25-109 (VTDDKQVYIV…VFPNKKLQLQ (85 aa)) are cleaved as a propeptide — activation peptide. The 78-residue stretch at 31-108 (VYIVYMGSLS…SVFPNKKLQL (78 aa)) folds into the Inhibitor I9 domain. In terms of domain architecture, Peptidase S8 spans 113 to 579 (SWDFMGLKEG…SGHVDPIAAS (467 aa)). Asp141 functions as the Charge relay system in the catalytic mechanism. An N-linked (GlcNAc...) asparagine glycan is attached at Asn172. His196 (charge relay system) is an active-site residue. Residue Asn219 is glycosylated (N-linked (GlcNAc...) asparagine). One can recognise a PA domain in the interval 352–436 (DYPLVYGKSA…GLLTEDFESL (85 aa)). A glycan (N-linked (GlcNAc...) asparagine) is linked at Asn458. The Charge relay system role is filled by Ser518. Residues Asn555, Asn600, Asn648, and Asn658 are each glycosylated (N-linked (GlcNAc...) asparagine).

Belongs to the peptidase S8 family. Post-translationally, the C-terminal propeptide is autocleaved.

Its subcellular location is the secreted. This Arabidopsis thaliana (Mouse-ear cress) protein is Subtilisin-like protease SBT4.13.